The following is a 116-amino-acid chain: AHLHALYLVHHEVWRPLAAAYQHQLDRPIVPHPFRLGDTVWVRRHQTNNLQPRWKAPYTVLLTTPTALKVDGIAAWIHAAHVKAATTPPAGTASGPTWKVQRSQNPLKIRLTRGAP.

In terms of biological role, catalyzes viral DNA integration into the host chromosome, by performing a series of DNA cutting and joining reactions. This Mus musculus (Mouse) protein is Pol polyprotein (pol).